We begin with the raw amino-acid sequence, 1045 residues long: Mitotic deacetylase-associated SANT domain protein (1045 aa).

Methionine 1 is modified (N-acetylmethionine). Disordered regions lie at residues 1–68 (MNLQ…PPPS) and 99–159 (NSVM…PTYY). Positions 132 to 146 (STWNCHSLSLYSATK) are enriched in polar residues. A Glycyl lysine isopeptide (Lys-Gly) (interchain with G-Cter in SUMO2) cross-link involves residue lysine 166. At arginine 193 the chain carries Asymmetric dimethylarginine. Disordered regions lie at residues 228-264 (QVFR…QQAA), 276-305 (SMPQ…AHHS), 330-349 (APQP…SRRL), 378-397 (HHWP…HPEA), and 410-441 (LPDG…STGD). Over residues 240–264 (VAAFPPQKQQQQQQPQQQQQQQQAA) the composition is skewed to low complexity. Residues 412 to 425 (DGERLAPNGREREA) show a composition bias toward basic and acidic residues. Position 447 is an omega-N-methylarginine (arginine 447). Serine 461 carries the post-translational modification Phosphoserine. The disordered stretch occupies residues 543–563 (QAGGLDEDGKGPEQNPAEHKP). Over residues 549-563 (EDGKGPEQNPAEHKP) the composition is skewed to basic and acidic residues. A Glycyl lysine isopeptide (Lys-Gly) (interchain with G-Cter in SUMO1); alternate cross-link involves residue lysine 590. A Glycyl lysine isopeptide (Lys-Gly) (interchain with G-Cter in SUMO2); alternate cross-link involves residue lysine 590. A Phosphothreonine modification is found at threonine 655. A Phosphoserine modification is found at serine 661. Threonine 704 is modified (phosphothreonine). Serine 709 carries the phosphoserine modification. Phosphothreonine is present on threonine 715. Residues 721-813 (PRINVGSRFQ…ETLNKLLLKK (93 aa)) enclose the ELM2 domain. The region spanning 828–879 (TGSDQWKMAERKLFNKGIAIYKKDFFLVQKLIQTKTVAQCVEFYYTYKKQVK) is the SANT domain. The interval 887 to 1045 (TFGDVDTSDE…NTFPCKKCGR (159 aa)) is disordered. 2 stretches are compositionally biased toward basic and acidic residues: residues 894–909 (SDEK…DIKT) and 919–942 (PRRE…RKEG). Serine 923 carries the post-translational modification Phosphoserine. Positions 943–957 (EEEVPEIQEKEEQEE) are enriched in acidic residues. The span at 970 to 980 (ATQTLQANESA) shows a compositional bias: polar residues.

As to quaternary structure, interacts with DNTTIP1. Identified in a histone deacetylase complex that contains DNTTIP1, HDAC1 and MIDEAS; this complex assembles into a tetramer that contains four copies of each protein chain.

Its subcellular location is the nucleus. The polypeptide is Mitotic deacetylase-associated SANT domain protein (Homo sapiens (Human)).